The following is a 389-amino-acid chain: P2X purinoceptor 6 (389 aa).

The Cytoplasmic segment spans residues 1–45 (MQLQPAGTGNMASAAAAALVSWGFLDYKTEKYVLTRNCRVGVSQR). The chain crosses the membrane as a helical span at residues 46–66 (LLQLAVVVYVIGWALLAKKGY). Over 67 to 335 (QERDLAPQTS…LVTGQAGKFA (269 aa)) the chain is Extracellular. Disulfide bonds link cysteine 129-cysteine 179, cysteine 140-cysteine 163, and cysteine 146-cysteine 173. Residues asparagine 167, asparagine 197, and asparagine 212 are each glycosylated (N-linked (GlcNAc...) asparagine). Cystine bridges form between cysteine 230/cysteine 240 and cysteine 274/cysteine 283. Residues 336 to 356 (LIPTAITVGTGAAWLGMVTFL) form a helical membrane-spanning segment. Residues 357 to 389 (CDLLLLYVDREAGFYWRTKYEEARAPKTTTNSS) are Cytoplasmic-facing.

Belongs to the P2X receptor family. As to quaternary structure, unlike most P2RXs, P2RX6 does not seem to form homotrimers. P2RX6 are likely to form as obligate heteromers with other P2RXs subunits. Forms heterotrimer with P2RX2 with a variable subunit stoichiometry determined by subunit expression levels. Forms heterotrimer with P2RX4; functional differences between homomeric P2RX4 and P2RX4/6 heterotrimer are minor. Forms a P2RX2/P2RX4/P2RX6 heterotrimer. Interacts with SF3A1; resulting in a reduction of the splicing activity. Post-translationally, N-glycosylated. N-linked glycosylation can affect trafficking to the membrane and function. In terms of tissue distribution, predominantly expressed in skeletal muscle. Also expressed in lung.

Its subcellular location is the cell membrane. It localises to the endoplasmic reticulum. The protein resides in the nucleus. It is found in the nucleus inner membrane. It carries out the reaction Ca(2+)(in) = Ca(2+)(out). Acts as a modulatory subunit rather than a functional channel. Unlike other P2XRs members, P2RX6 does not seem to form functional homotrimers. P2RX6 requires the presence of P2RX4 or P2RX2 to form functional heterotrimeric receptors at the plasma membrane. P2RX6 can be translocated to the nucleus, where it interacts with the splicing factor (SF3A1), to reduce the incidence of mRNA splicing. May function as a nuclear regulator of post-transcriptional modifications in neurons. The chain is P2X purinoceptor 6 (P2rx6) from Mus musculus (Mouse).